The following is a 31-amino-acid chain: Cyclotide vico-B (31 aa).

Positions 1-31 form a cross-link, cyclopeptide (Gly-Asn); it reads GSIPCAESCVYIPCITGIAGCSCKNKVCYYN. Intrachain disulfides connect C5–C21, C9–C23, and C14–C28.

Belongs to the cyclotide family. Bracelet subfamily. This is a cyclic peptide.

Functionally, probably participates in a plant defense mechanism. This is Cyclotide vico-B from Viola cotyledon (Violeta).